The primary structure comprises 719 residues: Pesticidal crystal protein Cry1Ic (719 aa).

It belongs to the delta endotoxin family.

Functionally, promotes colloidosmotic lysis by binding to the midgut epithelial cells of insects. This chain is Pesticidal crystal protein Cry1Ic (cry1Ic), found in Bacillus thuringiensis.